Consider the following 236-residue polypeptide: Orotidine 5'-phosphate decarboxylase (236 aa).

Residues Asp12, Lys34, 60 to 69 (DLKLHDIPHT), Thr123, Arg184, Gln193, Gly213, and Arg214 each bind substrate. Catalysis depends on Lys62, which acts as the Proton donor.

It belongs to the OMP decarboxylase family. Type 1 subfamily. In terms of assembly, homodimer.

It carries out the reaction orotidine 5'-phosphate + H(+) = UMP + CO2. It functions in the pathway pyrimidine metabolism; UMP biosynthesis via de novo pathway; UMP from orotate: step 2/2. In terms of biological role, catalyzes the decarboxylation of orotidine 5'-monophosphate (OMP) to uridine 5'-monophosphate (UMP). This Gluconobacter oxydans (strain 621H) (Gluconobacter suboxydans) protein is Orotidine 5'-phosphate decarboxylase.